Here is a 351-residue protein sequence, read N- to C-terminus: Anaerobic nitrite reductase Glb1-2 (351 aa).

Globin domains follow at residues 13 to 162 (DFTE…VEMK) and 184 to 333 (CFTE…AEMK). Heme b-binding residues include serine 56, lysine 70, histidine 74, lysine 104, threonine 108, histidine 109, serine 227, lysine 241, histidine 245, lysine 275, threonine 279, and histidine 280. The segment at 331–351 (EMKKTDHDHQTNVEDKSKPSS) is disordered.

This sequence belongs to the plant globin family. As to quaternary structure, monomer. Heme b serves as cofactor. Predominantly expressed in nodules and roots, and, to a lesser extent, in leaves, at low levels in pods, but barely in stems, petioles, buds and flowers. In terms of tissue distribution, mainly expressed in nodules and roots at low levels, and barely in leaves. As to expression, expressed at very low levels in nodules, roots and pods.

It localises to the cytoplasm. Its subcellular location is the nucleus. The catalysed reaction is Fe(III)-heme b-[protein] + nitric oxide + H2O = Fe(II)-heme b-[protein] + nitrite + 2 H(+). Phytoglobin that regulates the fine tuning of nitric oxide (NO) concentration in the cytosol in response to sudden changes in O(2) availability, and performs both symbiotic and nonsymbiotic functions. Exhibits NO dioxygenase activity in the presence of O(2) but nitrite reductase (NiR) activity in the absence of O(2) (e.g. during flooding or in waterlogged soil). May not function as an oxygen storage or transport protein. Extremely reactive toward the physiological ligands O(2), nitric oxide (NO), and nitrite with a very high affinity for O(2) through an hexacoordinate heme iron because of a very low dissociation constant. Functionally, very high affinity for O(2) through two hexacoordinate heme irons. Extremely reactive toward the physiological ligands O(2), nitric oxide (NO), and nitrite. Its function is as follows. Very high affinity for O(2) through a single hexacoordinate heme iron. Extremely reactive toward the physiological ligands O(2), nitric oxide (NO), and nitrite. The protein is Anaerobic nitrite reductase Glb1-2 of Medicago truncatula (Barrel medic).